The primary structure comprises 71 residues: UPF0435 protein SERP1418 (71 aa).

Belongs to the UPF0435 family.

This Staphylococcus epidermidis (strain ATCC 35984 / DSM 28319 / BCRC 17069 / CCUG 31568 / BM 3577 / RP62A) protein is UPF0435 protein SERP1418.